The sequence spans 215 residues: UPF0488 protein C8orf33 homolog (215 aa).

Disordered regions lie at residues 1-72 (MLED…DEQL), 87-111 (LRTQ…RSSK), and 158-199 (CKPV…DTKP). Over residues 29–39 (AKKHKKKKKKK) the composition is skewed to basic residues. Positions 40–63 (AGEGKDDQQRETKTTEGETAKQET) are enriched in basic and acidic residues. Basic and acidic residues-rich tracts occupy residues 167–178 (ERNTQPKNKTDG) and 188–199 (TNEHTKTEDTKP).

It belongs to the UPF0488 family.

The polypeptide is UPF0488 protein C8orf33 homolog (Danio rerio (Zebrafish)).